The following is a 132-amino-acid chain: MYSTIFNIGQINKYSKLAIFMSILFLCGCSSQTHSSQKETTIPVTLHVEDAKGLPVEGVQVTIVKAPSSDEEPSTEIGEILGKTDKNGDIKWDTGRKGDYSVALTKGETSVTHHISLTEDKKDHAIPLVFKE.

This is an uncharacterized protein from Bacillus subtilis (strain 168).